The following is a 271-amino-acid chain: Pyrroline-5-carboxylate reductase (271 aa).

It belongs to the pyrroline-5-carboxylate reductase family.

The protein resides in the cytoplasm. The catalysed reaction is L-proline + NADP(+) = (S)-1-pyrroline-5-carboxylate + NADPH + 2 H(+). It catalyses the reaction L-proline + NAD(+) = (S)-1-pyrroline-5-carboxylate + NADH + 2 H(+). The protein operates within amino-acid biosynthesis; L-proline biosynthesis; L-proline from L-glutamate 5-semialdehyde: step 1/1. In terms of biological role, catalyzes the reduction of 1-pyrroline-5-carboxylate (PCA) to L-proline. The chain is Pyrroline-5-carboxylate reductase from Staphylococcus aureus (strain Mu50 / ATCC 700699).